The chain runs to 648 residues: Probable potassium transport system protein Kup 1 (648 aa).

The next 12 helical transmembrane spans lie at 25 to 45 (LTLG…IYAF), 57 to 77 (IVAG…ILVV), 113 to 133 (LVMA…VITP), 153 to 173 (SVSR…LFLM), 184 to 204 (LFGP…LIHI), 219 to 239 (GVLF…AVFL), 263 to 283 (WLAI…AFAL), 312 to 332 (IPLV…VITG), 362 to 382 (IYLP…VLGF), 391 to 411 (AYGV…FLVV), 417 to 437 (WGWP…LFFF), and 446 to 466 (EGGW…VTWV).

This sequence belongs to the HAK/KUP transporter (TC 2.A.72) family.

The protein resides in the cell inner membrane. It carries out the reaction K(+)(in) + H(+)(in) = K(+)(out) + H(+)(out). Functionally, transport of potassium into the cell. Likely operates as a K(+):H(+) symporter. This is Probable potassium transport system protein Kup 1 from Rhizorhabdus wittichii (strain DSM 6014 / CCUG 31198 / JCM 15750 / NBRC 105917 / EY 4224 / RW1) (Sphingomonas wittichii).